Reading from the N-terminus, the 221-residue chain is uncharacterized protein (221 aa).

The next 4 membrane-spanning stretches (helical) occupy residues 30-50 (FGIF…LPLA), 62-82 (AGVV…LYWI), 144-164 (VWVF…VYVY), and 179-199 (ILDQ…LLYL).

It belongs to the DedA family.

The protein localises to the cell membrane. This is an uncharacterized protein from Bacillus subtilis (strain 168).